The sequence spans 297 residues: uncharacterized protein (297 aa).

The active site involves Glu-46.

Belongs to the PhzF family. As to quaternary structure, homodimer and homotetramer.

This is an uncharacterized protein from Escherichia coli (strain K12).